We begin with the raw amino-acid sequence, 278 residues long: Putative protein-disulfide oxidoreductase RF_0032 (278 aa).

The signal sequence occupies residues 1–18; the sequence is MRSIFIVPIFLLFLSSCS. The tract at residues 62-84 is disordered; it reads VPANDNNQTDEVSTPPSQEQKNP. Residues 65–81 are compositionally biased toward polar residues; the sequence is NDNNQTDEVSTPPSQEQ. Positions 77-266 constitute a Thioredoxin domain; that stretch reads PSQEQKNPEI…ISTAVDKALE (190 aa). Cysteines 119 and 122 form a disulfide.

Belongs to the thioredoxin family. DsbA subfamily.

The protein localises to the periplasm. Functionally, may be required for disulfide bond formation in some proteins. The polypeptide is Putative protein-disulfide oxidoreductase RF_0032 (Rickettsia felis (strain ATCC VR-1525 / URRWXCal2) (Rickettsia azadi)).